A 220-amino-acid chain; its full sequence is Small ribosomal subunit protein uS3 (220 aa).

Residues 39 to 107 (IREHVEGRLK…RVHINISEIK (69 aa)) enclose the KH type-2 domain.

It belongs to the universal ribosomal protein uS3 family. As to quaternary structure, part of the 30S ribosomal subunit. Forms a tight complex with proteins S10 and S14.

Functionally, binds the lower part of the 30S subunit head. Binds mRNA in the 70S ribosome, positioning it for translation. The sequence is that of Small ribosomal subunit protein uS3 from Shouchella clausii (strain KSM-K16) (Alkalihalobacillus clausii).